Consider the following 282-residue polypeptide: ATP synthase gamma chain (282 aa).

This sequence belongs to the ATPase gamma chain family. As to quaternary structure, F-type ATPases have 2 components, CF(1) - the catalytic core - and CF(0) - the membrane proton channel. CF(1) has five subunits: alpha(3), beta(3), gamma(1), delta(1), epsilon(1). CF(0) has three main subunits: a, b and c.

It is found in the cell membrane. In terms of biological role, produces ATP from ADP in the presence of a proton gradient across the membrane. The gamma chain is believed to be important in regulating ATPase activity and the flow of protons through the CF(0) complex. In Clostridium botulinum (strain ATCC 19397 / Type A), this protein is ATP synthase gamma chain.